The chain runs to 542 residues: T-complex protein 1 subunit delta (542 aa).

Residues 1-16 are compositionally biased toward low complexity; that stretch reads MPENVAPRTGPPAGAA. Positions 1-31 are disordered; the sequence is MPENVAPRTGPPAGAAGAAGGRGKSAYQDRD. Position 22 is an omega-N-methylarginine (Arg22). Lys24 bears the N6-acetyllysine mark. Ser39 is modified (phosphoserine). Gly56 is a binding site for ADP. Position 56 (Gly56) interacts with ATP. Asp107 contributes to the Mg(2+) binding site. Gly108, Thr109, Thr110, Ser111, Asn175, Ser176, and Lys177 together coordinate ADP. Residues Gly108 and Thr109 each contribute to the ATP site. Lys177 provides a ligand contact to ATP. Ser187 and Ser205 each carry phosphoserine. An N6-acetyllysine mark is found at Lys291, Lys305, Lys322, and Lys329. Gly428 is an ADP binding site. Residue Ser447 is modified to Phosphoserine. Gln513 provides a ligand contact to ADP.

This sequence belongs to the TCP-1 chaperonin family. As to quaternary structure, component of the chaperonin-containing T-complex (TRiC), a hexadecamer composed of two identical back-to-back stacked rings enclosing a protein folding chamber. Each ring is made up of eight different subunits: TCP1/CCT1, CCT2, CCT3, CCT4, CCT5, CCT6A/CCT6, CCT7, CCT8. Interacts with PACRG. Interacts with DNAAF4. Interacts with DLEC1.

It localises to the cytoplasm. Its subcellular location is the melanosome. The protein localises to the cytoskeleton. It is found in the microtubule organizing center. The protein resides in the centrosome. It localises to the cilium basal body. The catalysed reaction is ATP + H2O = ADP + phosphate + H(+). Its function is as follows. Component of the chaperonin-containing T-complex (TRiC), a molecular chaperone complex that assists the folding of actin, tubulin and other proteins upon ATP hydrolysis. The TRiC complex mediates the folding of WRAP53/TCAB1, thereby regulating telomere maintenance. As part of the TRiC complex may play a role in the assembly of BBSome, a complex involved in ciliogenesis regulating transports vesicles to the cilia. The sequence is that of T-complex protein 1 subunit delta (CCT4) from Bos taurus (Bovine).